A 524-amino-acid polypeptide reads, in one-letter code: uncharacterized protein (524 aa).

The first 26 residues, 1-26 (MLKIDMWFKLKSLGFSLISLQALLAS), serve as a signal peptide directing secretion. Cys-27 carries N-palmitoyl cysteine lipidation. Cys-27 carries S-diacylglycerol cysteine lipidation. The segment at 37 to 68 (IEEKNDSTTDNNATPFKDEQSDQGTEVNQQPK) is disordered. Residues 58 to 68 (DQGTEVNQQPK) show a composition bias toward polar residues.

The protein belongs to the MG067/MG068/MG395 family.

The protein resides in the cell membrane. This is an uncharacterized protein from Mycoplasma genitalium (strain ATCC 33530 / DSM 19775 / NCTC 10195 / G37) (Mycoplasmoides genitalium).